A 98-amino-acid chain; its full sequence is Tan_12Cys (98 aa).

An N-terminal signal peptide occupies residues 1-21; sequence MNLKVLFLLAMVLVTLCLGED. Positions 22–28 are excised as a propeptide; that stretch reads RVTDRRK.

This sequence belongs to the teretoxin C (TC) superfamily. Post-translationally, contains 6 disulfide bonds. Expressed by the venom duct.

It localises to the secreted. This Terebra anilis (Auger snail) protein is Tan_12Cys.